The chain runs to 172 residues: Small ribosomal subunit protein uS5 (172 aa).

The region spanning 17 to 80 is the S5 DRBM domain; it reads FTEKLIKLNR…ERAKRSMVLF (64 aa).

The protein belongs to the universal ribosomal protein uS5 family. In terms of assembly, part of the 30S ribosomal subunit. Contacts proteins S4 and S8.

In terms of biological role, with S4 and S12 plays an important role in translational accuracy. Located at the back of the 30S subunit body where it stabilizes the conformation of the head with respect to the body. The polypeptide is Small ribosomal subunit protein uS5 (Treponema pallidum (strain Nichols)).